The following is a 160-amino-acid chain: MTKKKEHKPGSATIAQNKRARHEYFIEQEFEAGLSLQGWEVKSLRAGKANIGDSYVLLKDGEAYLFGATFQPLTVASSHVVCDPMRTRKLLLNKRELDSLFGRVNREGYTVVALSLYWKNAWVKVKIGVAKGKKEYDKRTDIKEREWQLDKSRIMKHASR.

It belongs to the SmpB family.

It is found in the cytoplasm. Required for rescue of stalled ribosomes mediated by trans-translation. Binds to transfer-messenger RNA (tmRNA), required for stable association of tmRNA with ribosomes. tmRNA and SmpB together mimic tRNA shape, replacing the anticodon stem-loop with SmpB. tmRNA is encoded by the ssrA gene; the 2 termini fold to resemble tRNA(Ala) and it encodes a 'tag peptide', a short internal open reading frame. During trans-translation Ala-aminoacylated tmRNA acts like a tRNA, entering the A-site of stalled ribosomes, displacing the stalled mRNA. The ribosome then switches to translate the ORF on the tmRNA; the nascent peptide is terminated with the 'tag peptide' encoded by the tmRNA and targeted for degradation. The ribosome is freed to recommence translation, which seems to be the essential function of trans-translation. The sequence is that of SsrA-binding protein from Sodalis glossinidius (strain morsitans).